Consider the following 282-residue polypeptide: Pantothenate synthetase (282 aa).

ATP is bound at residue 26-33 (MGNLHEGH). Histidine 33 serves as the catalytic Proton donor. Glutamine 57 provides a ligand contact to (R)-pantoate. Glutamine 57 is a beta-alanine binding site. 148-151 (GKKD) serves as a coordination point for ATP. Glutamine 154 contacts (R)-pantoate. An ATP-binding site is contributed by 185-188 (LSSR).

Belongs to the pantothenate synthetase family. Homodimer.

The protein localises to the cytoplasm. The catalysed reaction is (R)-pantoate + beta-alanine + ATP = (R)-pantothenate + AMP + diphosphate + H(+). The protein operates within cofactor biosynthesis; (R)-pantothenate biosynthesis; (R)-pantothenate from (R)-pantoate and beta-alanine: step 1/1. Functionally, catalyzes the condensation of pantoate with beta-alanine in an ATP-dependent reaction via a pantoyl-adenylate intermediate. The sequence is that of Pantothenate synthetase from Paracidovorax citrulli (strain AAC00-1) (Acidovorax citrulli).